The sequence spans 236 residues: Small ribosomal subunit protein uS2c (236 aa).

The protein belongs to the universal ribosomal protein uS2 family.

It is found in the plastid. This Cuscuta gronovii (Common dodder) protein is Small ribosomal subunit protein uS2c (rps2).